A 128-amino-acid polypeptide reads, in one-letter code: Sulfurtransferase TusD (128 aa).

C78 (cysteine persulfide intermediate) is an active-site residue.

Belongs to the DsrE/TusD family. Heterohexamer, formed by a dimer of trimers. The hexameric TusBCD complex contains 2 copies each of TusB, TusC and TusD. The TusBCD complex interacts with TusE.

It localises to the cytoplasm. Functionally, part of a sulfur-relay system required for 2-thiolation of 5-methylaminomethyl-2-thiouridine (mnm(5)s(2)U) at tRNA wobble positions. Accepts sulfur from TusA and transfers it in turn to TusE. This is Sulfurtransferase TusD from Salmonella dublin (strain CT_02021853).